The following is a 265-amino-acid chain: Eukaryotic translation initiation factor 3 subunit J (265 aa).

Residues 24–34 (AGDEPILDSWD) show a composition bias toward acidic residues. The tract at residues 24–74 (AGDEPILDSWDEEPKAKKEAAKPKPKPKAGGKKNAKGEEKKEQVLAIDELD) is disordered. A compositionally biased stretch (basic and acidic residues) spans 35–45 (EEPKAKKEAAK). A compositionally biased stretch (basic residues) spans 46 to 57 (PKPKPKAGGKKN). 2 coiled-coil regions span residues 78-106 (RKEL…MAEE) and 190-220 (IENI…ARVK).

The protein belongs to the eIF-3 subunit J family. As to quaternary structure, component of the eukaryotic translation initiation factor 3 (eIF-3) complex.

The protein localises to the cytoplasm. Its function is as follows. Component of the eukaryotic translation initiation factor 3 (eIF-3) complex, which is involved in protein synthesis of a specialized repertoire of mRNAs and, together with other initiation factors, stimulates binding of mRNA and methionyl-tRNAi to the 40S ribosome. The eIF-3 complex specifically targets and initiates translation of a subset of mRNAs involved in cell proliferation. In Candida glabrata (strain ATCC 2001 / BCRC 20586 / JCM 3761 / NBRC 0622 / NRRL Y-65 / CBS 138) (Yeast), this protein is Eukaryotic translation initiation factor 3 subunit J.